The following is a 164-amino-acid chain: Terminase, small subunit (164 aa).

Residues 1 to 35 (MEGLDINKLLDISDLPGIDGEEIKVYEPLQLVEVK) form a helix-turn-helix (HTH) region. The interaction with gp17 stretch occupies residues 1–35 (MEGLDINKLLDISDLPGIDGEEIKVYEPLQLVEVK). The segment at 36–114 (SNPQNRTPDL…KDMKDITSEQ (79 aa)) is oligomerization. Residues 115–164 (VGTKGAVPTGQMNIQNATVFMGSPTELMDEIGDAYEAQEAREKVINGTTD) are interaction with gp17.

As to quaternary structure, homooctamer. Interacts with the terminase large subunit gp17; the active complex is probably heterooligomeric.

In terms of biological role, the terminase small subunit binds to the packaging initiation site and regulates the ATPase activity of the terminase large subunit. The terminase lies at a unique vertex of the procapsid and is composed of two subunits, a small terminase subunit involved in viral DNA recognition (packaging 'pac' sequence), and a large terminase subunit possessing endonucleolytic and ATPase activities. Both terminase subunits heterooligomerize and are docked on the portal protein to form the packaging machine. The terminase large subunit exhibits endonuclease activity and cleaves the viral genome concatemer once the capsid is full (headful packaging). Once the capsid is packaged with the DNA, the terminase complex is substituted by neck proteins. The sequence is that of Terminase, small subunit (16) from Enterobacteria phage T4 (Bacteriophage T4).